The primary structure comprises 405 residues: UDP-N-acetylglucosamine--N-acetylmuramyl-(pentapeptide) pyrophosphoryl-undecaprenol N-acetylglucosamine transferase (405 aa).

Residues 11–13 (TGG), asparagine 127, arginine 168, serine 191, isoleucine 248, and glutamine 293 each bind UDP-N-acetyl-alpha-D-glucosamine.

It belongs to the glycosyltransferase 28 family. MurG subfamily.

It is found in the cell inner membrane. It catalyses the reaction di-trans,octa-cis-undecaprenyl diphospho-N-acetyl-alpha-D-muramoyl-L-alanyl-D-glutamyl-meso-2,6-diaminopimeloyl-D-alanyl-D-alanine + UDP-N-acetyl-alpha-D-glucosamine = di-trans,octa-cis-undecaprenyl diphospho-[N-acetyl-alpha-D-glucosaminyl-(1-&gt;4)]-N-acetyl-alpha-D-muramoyl-L-alanyl-D-glutamyl-meso-2,6-diaminopimeloyl-D-alanyl-D-alanine + UDP + H(+). The protein operates within cell wall biogenesis; peptidoglycan biosynthesis. Functionally, cell wall formation. Catalyzes the transfer of a GlcNAc subunit on undecaprenyl-pyrophosphoryl-MurNAc-pentapeptide (lipid intermediate I) to form undecaprenyl-pyrophosphoryl-MurNAc-(pentapeptide)GlcNAc (lipid intermediate II). This Sorangium cellulosum (strain So ce56) (Polyangium cellulosum (strain So ce56)) protein is UDP-N-acetylglucosamine--N-acetylmuramyl-(pentapeptide) pyrophosphoryl-undecaprenol N-acetylglucosamine transferase.